We begin with the raw amino-acid sequence, 698 residues long: Auxin response factor 22 (698 aa).

The segment at residues 128–230 is a DNA-binding region (TF-B3); it reads FAKTLTQSDA…ELCVGIRRAK (103 aa). Polar residues predominate over residues 549–577; it reads TSSGSTETLSPGVTGNSSPNGNAHKTGNA. The tract at residues 549–579 is disordered; the sequence is TSSGSTETLSPGVTGNSSPNGNAHKTGNASD. Residues 603-683 form the PB1 domain; that stretch reads AGHCKVFMES…RRLTIIAGDR (81 aa).

Belongs to the ARF family. As to quaternary structure, homodimers and heterodimers. Expressed in roots, culms, leaves and young panicles.

The protein resides in the nucleus. Functionally, auxin response factors (ARFs) are transcriptional factors that bind specifically to the DNA sequence 5'-TGTCTC-3' found in the auxin-responsive promoter elements (AuxREs). The sequence is that of Auxin response factor 22 (ARF22) from Oryza sativa subsp. japonica (Rice).